Reading from the N-terminus, the 123-residue chain is Phospholipase A2 (123 aa).

7 disulfide bridges follow: cysteine 11–cysteine 77, cysteine 27–cysteine 123, cysteine 29–cysteine 45, cysteine 44–cysteine 105, cysteine 51–cysteine 98, cysteine 61–cysteine 91, and cysteine 84–cysteine 96. Ca(2+) contacts are provided by tyrosine 28, glycine 30, and glycine 32. Histidine 48 is a catalytic residue. Aspartate 49 provides a ligand contact to Ca(2+). Aspartate 99 is an active-site residue.

Belongs to the phospholipase A2 family. Monomer or homodimer. Ca(2+) serves as cofactor. Post-translationally, activated by trypsin cleavage in the duodenum. Can also be activated by thrombin or autocatalytically.

The protein resides in the secreted. It carries out the reaction a 1,2-diacyl-sn-glycero-3-phosphocholine + H2O = a 1-acyl-sn-glycero-3-phosphocholine + a fatty acid + H(+). It catalyses the reaction 1,2-ditetradecanoyl-sn-glycero-3-phosphocholine + H2O = 1-tetradecanoyl-sn-glycero-3-phosphocholine + tetradecanoate + H(+). The enzyme catalyses 1,2-dihexadecanoyl-sn-glycero-3-phosphocholine + H2O = 1-hexadecanoyl-sn-glycero-3-phosphocholine + hexadecanoate + H(+). The catalysed reaction is 1-hexadecanoyl-2-(9Z-octadecenoyl)-sn-glycero-3-phosphocholine + H2O = 1-hexadecanoyl-sn-glycero-3-phosphocholine + (9Z)-octadecenoate + H(+). It carries out the reaction 1-hexadecanoyl-2-(5Z,8Z,11Z,14Z-eicosatetraenoyl)-sn-glycero-3-phosphocholine + H2O = 1-hexadecanoyl-sn-glycero-3-phosphocholine + (5Z,8Z,11Z,14Z)-eicosatetraenoate + H(+). It catalyses the reaction 1-hexadecanoyl-2-(9Z-octadecenoyl)-sn-glycero-3-phospho-(1'-sn-glycerol) + H2O = 1-hexadecanoyl-sn-glycero-3-phospho-(1'-sn-glycerol) + (9Z)-octadecenoate + H(+). The enzyme catalyses N-hexadecanoyl-1,2-di-(9Z-octadecenoyl)-sn-glycero-3-phosphoethanolamine + H2O = N-hexadecanoyl-1-(9Z-octadecenoyl)-sn-glycero-3-phosphoethanolamine + (9Z)-octadecenoate + H(+). The catalysed reaction is 1-hexadecanoyl-2-(9Z,12Z-octadecadienoyl)-sn-glycero-3-phosphoethanolamine + H2O = 1-hexadecanoyl-sn-glycero-3-phosphoethanolamine + (9Z,12Z)-octadecadienoate + H(+). It carries out the reaction N,1-dihexadecanoyl-2-(9Z,12Z-octadecadienoyl)-sn-glycero-3-phosphoethanolamine + H2O = N,1-dihexadecanoyl-sn-glycero-3-phosphoethanolamine + (9Z,12Z)-octadecadienoate + H(+). Secretory calcium-dependent phospholipase A2 that primarily targets dietary phospholipids in the intestinal tract. Hydrolyzes the ester bond of the fatty acyl group attached at sn-2 position of phospholipids (phospholipase A2 activity) with preference for phosphatidylethanolamines and phosphatidylglycerols over phosphatidylcholines. May play a role in the biosynthesis of N-acyl ethanolamines that regulate energy metabolism and inflammation in the intestinal tract. Hydrolyzes N-acyl phosphatidylethanolamines to N-acyl lysophosphatidylethanolamines, which are further cleaved by a lysophospholipase D to release N-acyl ethanolamines. May act in an autocrine and paracrine manner. Has anti-helminth activity in a process regulated by gut microbiota. Upon helminth infection of intestinal epithelia, directly affects phosphatidylethanolamine contents in the membrane of helminth larvae, likely controlling an array of phospholipid-mediated cellular processes such as membrane fusion and cell division while providing for better immune recognition, ultimately reducing larvae integrity and infectivity. This chain is Phospholipase A2 (PLA2G1B), found in Ovis aries (Sheep).